The sequence spans 251 residues: 2,3-bisphosphoglycerate-dependent phosphoglycerate mutase (251 aa).

Residues 11–18 (RHGESDWN), 24–25 (TG), Arg-63, 90–93 (ERHY), Lys-101, 117–118 (RR), and 184–185 (GN) each bind substrate. Residue His-12 is the Tele-phosphohistidine intermediate of the active site. Glu-90 functions as the Proton donor/acceptor in the catalytic mechanism.

It belongs to the phosphoglycerate mutase family. BPG-dependent PGAM subfamily.

The catalysed reaction is (2R)-2-phosphoglycerate = (2R)-3-phosphoglycerate. Its pathway is carbohydrate degradation; glycolysis; pyruvate from D-glyceraldehyde 3-phosphate: step 3/5. In terms of biological role, catalyzes the interconversion of 2-phosphoglycerate and 3-phosphoglycerate. The chain is 2,3-bisphosphoglycerate-dependent phosphoglycerate mutase from Mycobacterium marinum (strain ATCC BAA-535 / M).